Reading from the N-terminus, the 256-residue chain is Putative ankyrin repeat protein FPV231 (256 aa).

5 ANK repeats span residues 1-20 (MFGNTTISKMLLDYGARIDS), 24-53 (EECLPLNHAIATNNKELTSLFLARGADTNI), 57-86 (YNRSVLHKAIGNNNITSVKLLLNHGIDYNL), 90-119 (HGYTALHYAITLQNREITDMLLSSGADPNI), and 123-151 (EKHTPLYHALLYRSSNVESLILHGADINI).

This Vertebrata (FPV) protein is Putative ankyrin repeat protein FPV231.